A 498-amino-acid chain; its full sequence is Lysine--tRNA ligase (498 aa).

Mg(2+) is bound by residues Glu-407 and Glu-414.

It belongs to the class-II aminoacyl-tRNA synthetase family. As to quaternary structure, homodimer. Mg(2+) is required as a cofactor.

The protein resides in the cytoplasm. The catalysed reaction is tRNA(Lys) + L-lysine + ATP = L-lysyl-tRNA(Lys) + AMP + diphosphate. The polypeptide is Lysine--tRNA ligase (Rhizobium johnstonii (strain DSM 114642 / LMG 32736 / 3841) (Rhizobium leguminosarum bv. viciae)).